The chain runs to 644 residues: Chaperone protein DnaK (644 aa).

The residue at position 199 (threonine 199) is a Phosphothreonine; by autocatalysis. The disordered stretch occupies residues 602–644 (IYAKKSSEGQTAQGQTQSQESTKPAEEGVVDAEFEEVKEEDKK). Polar residues predominate over residues 609–623 (EGQTAQGQTQSQEST). Positions 629–644 (GVVDAEFEEVKEEDKK) are enriched in acidic residues.

Belongs to the heat shock protein 70 family.

Acts as a chaperone. This chain is Chaperone protein DnaK, found in Legionella pneumophila (strain Lens).